We begin with the raw amino-acid sequence, 62 residues long: Large ribosomal subunit protein bL33 (62 aa).

The protein belongs to the bacterial ribosomal protein bL33 family.

This Porphyromonas gingivalis (strain ATCC 33277 / DSM 20709 / CIP 103683 / JCM 12257 / NCTC 11834 / 2561) protein is Large ribosomal subunit protein bL33.